The sequence spans 36 residues: Peruvianin-1 (36 aa).

This sequence belongs to the germin family. As to quaternary structure, homohexamer, possibly consisting of a trimer of dimers. Post-translationally, glycosylated.

Its activity is regulated as follows. Inhibited by iodoacetamide and trans-epoxysuccinyl-L-leucylamido(4-guanidino)butane (E-64) but not by phenylmethylsulfonyl fluoride (PMSF), pepstatin-A, ethylenediamine tetra acetic acid (EDTA) or ethylene glycol tetraacetic acid (EGTA). In terms of biological role, cysteine protease able to degrade azocasein and benzoyl-arginine-beta-naphtylamide (BANA) in vitro. The polypeptide is Peruvianin-1 (Thevetia peruviana (Yellow oleander)).